Reading from the N-terminus, the 431-residue chain is Tyrosine--tRNA ligase (431 aa).

Position 33 (Tyr33) interacts with L-tyrosine. The short motif at 38-47 (PTADSLHIGS) is the 'HIGH' region element. Residues Tyr172 and Gln176 each contribute to the L-tyrosine site. The 'KMSKS' region signature appears at 234–238 (KFGKS). Lys237 is a binding site for ATP. The S4 RNA-binding domain maps to 364–431 (INIVEVLNEK…KKNYFVLNVK (68 aa)).

Belongs to the class-I aminoacyl-tRNA synthetase family. TyrS type 1 subfamily. In terms of assembly, homodimer.

Its subcellular location is the cytoplasm. The catalysed reaction is tRNA(Tyr) + L-tyrosine + ATP = L-tyrosyl-tRNA(Tyr) + AMP + diphosphate + H(+). Functionally, catalyzes the attachment of tyrosine to tRNA(Tyr) in a two-step reaction: tyrosine is first activated by ATP to form Tyr-AMP and then transferred to the acceptor end of tRNA(Tyr). The polypeptide is Tyrosine--tRNA ligase (Flavobacterium psychrophilum (strain ATCC 49511 / DSM 21280 / CIP 103535 / JIP02/86)).